We begin with the raw amino-acid sequence, 499 residues long: Aspartyl/glutamyl-tRNA(Asn/Gln) amidotransferase subunit B (499 aa).

Belongs to the GatB/GatE family. GatB subfamily. In terms of assembly, heterotrimer of A, B and C subunits.

It catalyses the reaction L-glutamyl-tRNA(Gln) + L-glutamine + ATP + H2O = L-glutaminyl-tRNA(Gln) + L-glutamate + ADP + phosphate + H(+). It carries out the reaction L-aspartyl-tRNA(Asn) + L-glutamine + ATP + H2O = L-asparaginyl-tRNA(Asn) + L-glutamate + ADP + phosphate + 2 H(+). In terms of biological role, allows the formation of correctly charged Asn-tRNA(Asn) or Gln-tRNA(Gln) through the transamidation of misacylated Asp-tRNA(Asn) or Glu-tRNA(Gln) in organisms which lack either or both of asparaginyl-tRNA or glutaminyl-tRNA synthetases. The reaction takes place in the presence of glutamine and ATP through an activated phospho-Asp-tRNA(Asn) or phospho-Glu-tRNA(Gln). This chain is Aspartyl/glutamyl-tRNA(Asn/Gln) amidotransferase subunit B, found in Bifidobacterium animalis subsp. lactis (strain AD011).